Reading from the N-terminus, the 366-residue chain is Cyclic amide hydrolase (366 aa).

Residues 1-103 (MKVGVHKLAM…TLFTRAPDDG (103 aa)) are RU A. Substrate is bound by residues R51 and 82–83 (SG). The segment at 110–247 (RLALGIGITR…CEVLLFGNAP (138 aa)) is RU B. K160 is a catalytic residue. Residues R192, 230–231 (SA), R327, and 346–347 (SG) each bind substrate. The active-site Nucleophile is the S230. Positions 253 to 366 (FRIGHGVLKD…AAPIAAIVRA (114 aa)) are RU C.

The protein belongs to the cyclic amide hydrolase (CyAH) family. In terms of assembly, homotetramer.

Cyclic amide hydrolase of unknown substrate specificity. Catalyzes the hydrolytic ring-opening of a cyclic amide. Does not act on cyanuric acid nor barbituric acid. This chain is Cyclic amide hydrolase, found in Azorhizobium caulinodans (strain ATCC 43989 / DSM 5975 / JCM 20966 / LMG 6465 / NBRC 14845 / NCIMB 13405 / ORS 571).